The sequence spans 494 residues: Adenosylhomocysteinase (494 aa).

Residues T72, D155, and E217 each contribute to the substrate site. 218–220 provides a ligand contact to NAD(+); that stretch reads TTT. K247 and D251 together coordinate substrate. NAD(+)-binding positions include N252, 281-286, E304, N339, 360-362, and N408; these read GYGDVG and IGH.

The protein belongs to the adenosylhomocysteinase family. It depends on NAD(+) as a cofactor.

The protein localises to the cytoplasm. It catalyses the reaction S-adenosyl-L-homocysteine + H2O = L-homocysteine + adenosine. The protein operates within amino-acid biosynthesis; L-homocysteine biosynthesis; L-homocysteine from S-adenosyl-L-homocysteine: step 1/1. Functionally, may play a key role in the regulation of the intracellular concentration of adenosylhomocysteine. This is Adenosylhomocysteinase from Nocardia farcinica (strain IFM 10152).